We begin with the raw amino-acid sequence, 230 residues long: Phosphoenolpyruvate guanylyltransferase (230 aa).

Positions 139, 155, and 158 each coordinate phosphoenolpyruvate.

The protein belongs to the CofC family.

The catalysed reaction is phosphoenolpyruvate + GTP + H(+) = enolpyruvoyl-2-diphospho-5'-guanosine + diphosphate. It functions in the pathway cofactor biosynthesis; coenzyme F420 biosynthesis. Guanylyltransferase that catalyzes the activation of phosphoenolpyruvate (PEP) as enolpyruvoyl-2-diphospho-5'-guanosine, via the condensation of PEP with GTP. It is involved in the biosynthesis of coenzyme F420, a hydride carrier cofactor. This is Phosphoenolpyruvate guanylyltransferase from Thermobaculum terrenum (strain ATCC BAA-798 / CCMEE 7001 / YNP1).